Here is a 325-residue protein sequence, read N- to C-terminus: Cell wall mannoprotein PIR3 (325 aa).

Positions 1 to 18 (MQYKKPLVVSALAATSLA) are cleaved as a signal peptide. The propeptide occupies 19 to 67 (AYAPKDPWSTLTPSATYKGGITDYSSSFGIAIEAVATSASSVASSKAKR). 8 PIR1/2/3 repeats span residues 68-91 (AASQ…KKST), 92-109 (AAAV…AKST), 110-127 (AAAV…AKST), 128-145 (AAAV…AKST), 146-163 (AAAV…AKST), 164-181 (AAAA…TTST), 182-199 (KAAA…SKTT), and 200-217 (SGAS…AEVK).

It belongs to the PIR protein family. Post-translationally, covalently linked to beta-1,3-glucan of the inner cell wall layer via an alkali-sensitive ester linkage between the gamma-carboxyl group of glutamic acids, arising from specific glutamines within the PIR1/2/3 repeats, and hydroxyl groups of glucoses of beta-1,3-glucan chains. O-glycosylated. Extensively O-mannosylated.

The protein localises to the secreted. It is found in the cell wall. Functionally, component of the outer cell wall layer. Required for stability of the cell wall and for optimal growth. Required for resistance against several antifungal and cell wall-perturbing agents. The polypeptide is Cell wall mannoprotein PIR3 (PIR3) (Saccharomyces cerevisiae (strain ATCC 204508 / S288c) (Baker's yeast)).